Consider the following 383-residue polypeptide: PqqA peptide cyclase (383 aa).

Positions 11-226 (PGPPLWLLAE…TNQWREKLAA (216 aa)) constitute a Radical SAM core domain. [4Fe-4S] cluster is bound by residues cysteine 25, cysteine 29, and cysteine 32.

The protein belongs to the radical SAM superfamily. PqqE family. As to quaternary structure, interacts with PqqD. The interaction is necessary for activity of PqqE. It depends on [4Fe-4S] cluster as a cofactor.

The enzyme catalyses [PQQ precursor protein] + S-adenosyl-L-methionine = E-Y cross-linked-[PQQ precursor protein] + 5'-deoxyadenosine + L-methionine + H(+). It participates in cofactor biosynthesis; pyrroloquinoline quinone biosynthesis. Functionally, catalyzes the cross-linking of a glutamate residue and a tyrosine residue in the PqqA protein as part of the biosynthesis of pyrroloquinoline quinone (PQQ). The sequence is that of PqqA peptide cyclase from Azotobacter vinelandii (strain DJ / ATCC BAA-1303).